Reading from the N-terminus, the 319-residue chain is Ribonuclease Z (319 aa).

Residues histidine 62, histidine 64, aspartate 66, histidine 67, histidine 145, aspartate 216, and histidine 274 each contribute to the Zn(2+) site. The Proton acceptor role is filled by aspartate 66.

The protein belongs to the RNase Z family. Homodimer. Requires Zn(2+) as cofactor.

The catalysed reaction is Endonucleolytic cleavage of RNA, removing extra 3' nucleotides from tRNA precursor, generating 3' termini of tRNAs. A 3'-hydroxy group is left at the tRNA terminus and a 5'-phosphoryl group is left at the trailer molecule.. Its function is as follows. Zinc phosphodiesterase, which displays some tRNA 3'-processing endonuclease activity. Probably involved in tRNA maturation, by removing a 3'-trailer from precursor tRNA. This is Ribonuclease Z from Synechococcus sp. (strain CC9902).